The primary structure comprises 340 residues: Probable sugar phosphate/phosphate translocator At3g14410 (340 aa).

10 helical membrane passes run 12–32 (EFVTYAYILLYIALSSGQIFF), 44–64 (FPYPLGLTLLHMIFSSVLCFL), 80–100 (LEIYVTSVIPIGAMFAMTLWL), 110–130 (VAFAQMLKAIMPVAVFILGVA), 141–161 (LLIMSIISFGVLVASYGELNI), 163–183 (WIGVVYQMGGVVGEALRLIFM), 197–217 (ISLMYYVSPCSAICLFVPWIF), 234–254 (VVLTLNSLCTFALNLSVFLVI), 260–282 (LTIRVAGVVKDWVVVLVSALLFA), and 286–305 (LTIINLFGYAIAIAGVAAYN). Positions 320-340 (ETPGDAESIPLVSQGNTNTER) are disordered. Positions 330–340 (LVSQGNTNTER) are enriched in polar residues.

It belongs to the TPT transporter family. TPT (TC 2.A.7.9) subfamily.

It is found in the membrane. The protein is Probable sugar phosphate/phosphate translocator At3g14410 of Arabidopsis thaliana (Mouse-ear cress).